A 181-amino-acid chain; its full sequence is Probable N-acetyltransferase YjcK (181 aa).

The region spanning Ile-7–Leu-172 is the N-acetyltransferase domain.

It belongs to the acetyltransferase family. RimJ subfamily.

The catalysed reaction is an N-terminal L-alpha-aminoacyl-[protein] + acetyl-CoA = N-terminal N(alpha)-acetyl-L-alpha-aminoacyl-[protein] + CoA + H(+). In terms of biological role, probable N-terminal protein acetyltransferase. The sequence is that of Probable N-acetyltransferase YjcK (yjcK) from Bacillus subtilis (strain 168).